A 118-amino-acid polypeptide reads, in one-letter code: Large ribosomal subunit protein bL17 (118 aa).

The protein belongs to the bacterial ribosomal protein bL17 family. In terms of assembly, part of the 50S ribosomal subunit. Contacts protein L32.

This Onion yellows phytoplasma (strain OY-M) protein is Large ribosomal subunit protein bL17.